The following is a 483-amino-acid chain: Cytochrome P450 71A23 (483 aa).

The chain crosses the membrane as a helical span at residues 1 to 21; the sequence is MILFLCLIILFIITILFFKKH. Position 429 (Cys-429) interacts with heme.

Belongs to the cytochrome P450 family. Heme is required as a cofactor.

Its subcellular location is the membrane. This chain is Cytochrome P450 71A23 (CYP71A23), found in Arabidopsis thaliana (Mouse-ear cress).